Consider the following 1046-residue polypeptide: Probable inorganic carbon transporter subunit DabA1 (1046 aa).

The Zn(2+) site is built by Cys-462, Asp-464, His-721, and Cys-736.

This sequence belongs to the inorganic carbon transporter (TC 9.A.2) DabA family. In terms of assembly, forms a complex with DabB1. The cofactor is Zn(2+).

Its subcellular location is the cell inner membrane. Functionally, part of an energy-coupled inorganic carbon pump. The sequence is that of Probable inorganic carbon transporter subunit DabA1 from Halothiobacillus neapolitanus (strain ATCC 23641 / c2) (Thiobacillus neapolitanus).